The primary structure comprises 784 residues: LPS-assembly protein LptD (784 aa).

The N-terminal stretch at 1–24 is a signal peptide; that stretch reads MKKRIPTLLATMIASALYSHQGLA. 2 disulfide bridges follow: C31/C724 and C173/C725.

Belongs to the LptD family. In terms of assembly, component of the lipopolysaccharide transport and assembly complex. Interacts with LptE and LptA. Post-translationally, contains two intramolecular disulfide bonds.

The protein resides in the cell outer membrane. In terms of biological role, together with LptE, is involved in the assembly of lipopolysaccharide (LPS) at the surface of the outer membrane. This Salmonella typhi protein is LPS-assembly protein LptD.